The primary structure comprises 471 residues: Siroheme synthase (471 aa).

The segment at 1–203 is precorrin-2 dehydrogenase /sirohydrochlorin ferrochelatase; sequence MEYLPLFADL…GRLEQAEQAL (203 aa). Residues 22-23 and 43-44 each bind NAD(+); these read EV and RA. S128 is modified (phosphoserine). A uroporphyrinogen-III C-methyltransferase region spans residues 215 to 471; the sequence is GEVALVGAGP…QKRASVVNLA (257 aa). P224 contacts S-adenosyl-L-methionine. D247 functions as the Proton acceptor in the catalytic mechanism. K269 acts as the Proton donor in catalysis. Residues 300-302, I305, 330-331, M382, and G411 contribute to the S-adenosyl-L-methionine site; these read GGD and TA.

In the N-terminal section; belongs to the precorrin-2 dehydrogenase / sirohydrochlorin ferrochelatase family. This sequence in the C-terminal section; belongs to the precorrin methyltransferase family.

The enzyme catalyses uroporphyrinogen III + 2 S-adenosyl-L-methionine = precorrin-2 + 2 S-adenosyl-L-homocysteine + H(+). It catalyses the reaction precorrin-2 + NAD(+) = sirohydrochlorin + NADH + 2 H(+). It carries out the reaction siroheme + 2 H(+) = sirohydrochlorin + Fe(2+). Its pathway is cofactor biosynthesis; adenosylcobalamin biosynthesis; precorrin-2 from uroporphyrinogen III: step 1/1. It participates in cofactor biosynthesis; adenosylcobalamin biosynthesis; sirohydrochlorin from precorrin-2: step 1/1. The protein operates within porphyrin-containing compound metabolism; siroheme biosynthesis; precorrin-2 from uroporphyrinogen III: step 1/1. It functions in the pathway porphyrin-containing compound metabolism; siroheme biosynthesis; siroheme from sirohydrochlorin: step 1/1. Its pathway is porphyrin-containing compound metabolism; siroheme biosynthesis; sirohydrochlorin from precorrin-2: step 1/1. In terms of biological role, multifunctional enzyme that catalyzes the SAM-dependent methylations of uroporphyrinogen III at position C-2 and C-7 to form precorrin-2 via precorrin-1. Then it catalyzes the NAD-dependent ring dehydrogenation of precorrin-2 to yield sirohydrochlorin. Finally, it catalyzes the ferrochelation of sirohydrochlorin to yield siroheme. The sequence is that of Siroheme synthase from Sodalis glossinidius (strain morsitans).